The sequence spans 227 residues: 2,3-bisphosphoglycerate-dependent phosphoglycerate mutase (227 aa).

Substrate-binding positions include Arg-8–Asn-15, Thr-21–Gly-22, Arg-58, Glu-110–Tyr-113, Lys-121, Arg-137–Arg-138, and Gly-181–Asn-182. His-9 serves as the catalytic Tele-phosphohistidine intermediate. Glu-110 (proton donor/acceptor) is an active-site residue.

It belongs to the phosphoglycerate mutase family. BPG-dependent PGAM subfamily. In terms of assembly, homodimer.

The enzyme catalyses (2R)-2-phosphoglycerate = (2R)-3-phosphoglycerate. The protein operates within carbohydrate degradation; glycolysis; pyruvate from D-glyceraldehyde 3-phosphate: step 3/5. In terms of biological role, catalyzes the interconversion of 2-phosphoglycerate and 3-phosphoglycerate. The polypeptide is 2,3-bisphosphoglycerate-dependent phosphoglycerate mutase (Pseudoalteromonas atlantica (strain T6c / ATCC BAA-1087)).